Reading from the N-terminus, the 90-residue chain is Putative membrane protein insertion efficiency factor (90 aa).

It belongs to the UPF0161 family.

It localises to the cell inner membrane. Could be involved in insertion of integral membrane proteins into the membrane. This is Putative membrane protein insertion efficiency factor from Bordetella bronchiseptica (strain ATCC BAA-588 / NCTC 13252 / RB50) (Alcaligenes bronchisepticus).